A 96-amino-acid polypeptide reads, in one-letter code: Protein Vpr (96 aa).

The tract at residues 1–42 (MEQAPADQGPQREPHNEWTLELLEELKQEAVRHFPRIWLHSL) is homooligomerization. Ser-79, Ser-94, and Ser-96 each carry phosphoserine; by host.

The protein belongs to the HIV-1 VPR protein family. As to quaternary structure, homooligomer, may form homodimer. Interacts with p6-gag region of the Pr55 Gag precursor protein through a (Leu-X-X)4 motif near the C-terminus of the P6gag protein. Interacts with host UNG. May interact with host RAD23A/HHR23A. Interacts with host VPRBP/DCAF1, leading to hijack the CUL4A-RBX1-DDB1-DCAF1/VPRBP complex, mediating ubiquitination of host proteins such as TERT and ZGPAT and arrest of the cell cycle in G2 phase. Phosphorylated on several residues by host. These phosphorylations regulate VPR activity for the nuclear import of the HIV-1 pre-integration complex.

The protein resides in the virion. It is found in the host nucleus. Its subcellular location is the host extracellular space. In terms of biological role, during virus replication, may deplete host UNG protein, and incude G2-M cell cycle arrest. Acts by targeting specific host proteins for degradation by the 26S proteasome, through association with the cellular CUL4A-DDB1 E3 ligase complex by direct interaction with host VPRPB/DCAF-1. Cell cycle arrest reportedly occurs within hours of infection and is not blocked by antiviral agents, suggesting that it is initiated by the VPR carried into the virion. Additionally, VPR induces apoptosis in a cell cycle dependent manner suggesting that these two effects are mechanistically linked. Detected in the serum and cerebrospinal fluid of AIDS patient, VPR may also induce cell death to bystander cells. During virus entry, plays a role in the transport of the viral pre-integration (PIC) complex to the host nucleus. This function is crucial for viral infection of non-dividing macrophages. May act directly at the nuclear pore complex, by binding nucleoporins phenylalanine-glycine (FG)-repeat regions. This Homo sapiens (Human) protein is Protein Vpr.